Here is a 320-residue protein sequence, read N- to C-terminus: GDSL esterase/lipase At3g43570 (320 aa).

The first 19 residues, 1-19 (MKIQIIWLTLVLIVVEANA), serve as a signal peptide directing secretion. Asn25 carries an N-linked (GlcNAc...) asparagine glycan. The Nucleophile role is filled by Ser37. A glycan (N-linked (GlcNAc...) asparagine) is linked at Asn287. Active-site residues include Asp295 and His298.

The protein belongs to the 'GDSL' lipolytic enzyme family.

The protein resides in the secreted. The polypeptide is GDSL esterase/lipase At3g43570 (Arabidopsis thaliana (Mouse-ear cress)).